Here is a 216-residue protein sequence, read N- to C-terminus: MLIAKLLLVVIVSYILGSIPFGYLVSHRGSKIDIRSFGSGRTGATNVLRTMGRKAALLVASLDVIKGASAVAFAGLVIGTEALAFGTNGMALLFAQVLAGLAAVAGHIWPVFLKFRGGRGVATFFGGMIALCPVAAIFGGEVLIIGAGLSGFASLGSITGVVGAYALLVPLTLISGFPTEYMIYAVIGSLLITIMHRDNIKRLLAGKERKLNEKAR.

5 consecutive transmembrane segments (helical) span residues 6-26 (LLLV…YLVS), 58-78 (LVAS…GLVI), 92-112 (LLFA…WPVF), 125-145 (FGGM…VLII), and 158-178 (ITGV…SGFP).

The protein belongs to the PlsY family. As to quaternary structure, probably interacts with PlsX.

The protein resides in the cell membrane. It catalyses the reaction an acyl phosphate + sn-glycerol 3-phosphate = a 1-acyl-sn-glycero-3-phosphate + phosphate. Its pathway is lipid metabolism; phospholipid metabolism. Functionally, catalyzes the transfer of an acyl group from acyl-phosphate (acyl-PO(4)) to glycerol-3-phosphate (G3P) to form lysophosphatidic acid (LPA). This enzyme utilizes acyl-phosphate as fatty acyl donor, but not acyl-CoA or acyl-ACP. The polypeptide is Glycerol-3-phosphate acyltransferase 3 (Dehalococcoides mccartyi (strain CBDB1)).